Here is a 226-residue protein sequence, read N- to C-terminus: ATP synthase F(0) complex subunit a (226 aa).

The next 6 membrane-spanning stretches (helical) occupy residues isoleucine 14–proline 34, tryptophan 68–leucine 88, glutamine 97–phenylalanine 117, isoleucine 138–valine 158, isoleucine 164–isoleucine 184, and phenylalanine 193–valine 213.

The protein belongs to the ATPase A chain family. Component of the ATP synthase complex composed at least of ATP5F1A/subunit alpha, ATP5F1B/subunit beta, ATP5MC1/subunit c (homooctomer), MT-ATP6/subunit a, MT-ATP8/subunit 8, ATP5ME/subunit e, ATP5MF/subunit f, ATP5MG/subunit g, ATP5MK/subunit k, ATP5MJ/subunit j, ATP5F1C/subunit gamma, ATP5F1D/subunit delta, ATP5F1E/subunit epsilon, ATP5PF/subunit F6, ATP5PB/subunit b, ATP5PD/subunit d, ATP5PO/subunit OSCP. ATP synthase complex consists of a soluble F(1) head domain (subunits alpha(3) and beta(3)) - the catalytic core - and a membrane F(0) domain - the membrane proton channel (subunits c, a, 8, e, f, g, k and j). These two domains are linked by a central stalk (subunits gamma, delta, and epsilon) rotating inside the F1 region and a stationary peripheral stalk (subunits F6, b, d, and OSCP). Interacts with DNAJC30; interaction is direct.

Its subcellular location is the mitochondrion inner membrane. It catalyses the reaction H(+)(in) = H(+)(out). Its function is as follows. Subunit a, of the mitochondrial membrane ATP synthase complex (F(1)F(0) ATP synthase or Complex V) that produces ATP from ADP in the presence of a proton gradient across the membrane which is generated by electron transport complexes of the respiratory chain. ATP synthase complex consist of a soluble F(1) head domain - the catalytic core - and a membrane F(1) domain - the membrane proton channel. These two domains are linked by a central stalk rotating inside the F(1) region and a stationary peripheral stalk. During catalysis, ATP synthesis in the catalytic domain of F(1) is coupled via a rotary mechanism of the central stalk subunits to proton translocation. With the subunit c (ATP5MC1), forms the proton-conducting channel in the F(0) domain, that contains two crucial half-channels (inlet and outlet) that facilitate proton movement from the mitochondrial intermembrane space (IMS) into the matrix. Protons are taken up via the inlet half-channel and released through the outlet half-channel, following a Grotthuss mechanism. This chain is ATP synthase F(0) complex subunit a, found in Tachyglossus aculeatus aculeatus (Southeast Australian short-beaked echidna).